A 446-amino-acid polypeptide reads, in one-letter code: 5-hydroxytryptamine receptor (446 aa).

The Extracellular segment spans residues 1–65 (MEGAEGQEEL…AALVRAAAKA (65 aa)). Asn-23, Asn-27, Asn-36, and Asn-42 each carry an N-linked (GlcNAc...) asparagine glycan. A helical transmembrane segment spans residues 66-88 (VVLGLLILATVVGNVFVIAAILL). Over 89–98 (ERHLRSAANN) the chain is Cytoplasmic. The helical transmembrane segment at 99–120 (LILSLAVADLLVACLVMPLGAV) threads the bilayer. The Extracellular portion of the chain corresponds to 121-135 (YEVVQRWTLGPELCD). Cys-134 and Cys-214 form a disulfide bridge. The chain crosses the membrane as a helical span at residues 136-157 (MWTSGDVLCCTASILHLVAIAL). At 158–176 (DRYWAVTNIDYIHASTAKR) the chain is on the cytoplasmic side. The chain crosses the membrane as a helical span at residues 177 to 199 (VGMMIACVWTVSFFVCIAQLLGW). Residues 200–227 (KDPDWNQRVSEDLRCVVSQDVGYQIFAT) are Extracellular-facing. Residues 228-249 (ASSFYVPVLIILILYWRIYQTA) form a helical membrane-spanning segment. The Cytoplasmic segment spans residues 250–367 (RKRIRRRRGA…SKRERKAAKT (118 aa)). Polar residues predominate over residues 304-324 (TTTGFTNVSSNNTSPEKQSCA). The tract at residues 304 to 329 (TTTGFTNVSSNNTSPEKQSCANGLEA) is disordered. A helical membrane pass occupies residues 368–391 (LAIITGAFVACWLPFFVLAILVPT). Topologically, residues 392–399 (CDCEVSPV) are extracellular. Residues 400-422 (LTSLSLWLGYFNSTLNPVIYTVF) form a helical membrane-spanning segment. Topologically, residues 423–446 (SPEFRHAFQRLLCGRRVRRRRAPQ) are cytoplasmic.

It belongs to the G-protein coupled receptor 1 family.

Its subcellular location is the cell membrane. This is a receptor for 5-hydroxytryptamine (serotonin), a biogenic hormone that function as a neurotransmitter, a hormone, and a mitogen. This chain is 5-hydroxytryptamine receptor, found in Bombyx mori (Silk moth).